A 146-amino-acid polypeptide reads, in one-letter code: Hemoglobin subunit beta (146 aa).

The 145-residue stretch at 2–146 (HWSAEEKQLI…VAHALARKYH (145 aa)) folds into the Globin domain. Heme b-binding residues include His63 and His92.

Belongs to the globin family. As to quaternary structure, heterotetramer of two alpha chains and two beta chains. As to expression, red blood cells.

In terms of biological role, involved in oxygen transport from the lung to the various peripheral tissues. The polypeptide is Hemoglobin subunit beta (HBB) (Eudyptes chrysocome (Western rockhopper penguin)).